A 178-amino-acid polypeptide reads, in one-letter code: UPF0114 protein HPSH_00970 (178 aa).

Helical transmembrane passes span 15 to 35 (WLLA…GYVF), 54 to 74 (LVLS…VLMV), 102 to 122 (FNAL…IFLL), and 145 to 165 (PIFW…LAAV).

The protein belongs to the UPF0114 family.

It is found in the cell membrane. This Helicobacter pylori (strain Shi470) protein is UPF0114 protein HPSH_00970.